We begin with the raw amino-acid sequence, 160 residues long: SsrA-binding protein (160 aa).

It belongs to the SmpB family.

The protein resides in the cytoplasm. In terms of biological role, required for rescue of stalled ribosomes mediated by trans-translation. Binds to transfer-messenger RNA (tmRNA), required for stable association of tmRNA with ribosomes. tmRNA and SmpB together mimic tRNA shape, replacing the anticodon stem-loop with SmpB. tmRNA is encoded by the ssrA gene; the 2 termini fold to resemble tRNA(Ala) and it encodes a 'tag peptide', a short internal open reading frame. During trans-translation Ala-aminoacylated tmRNA acts like a tRNA, entering the A-site of stalled ribosomes, displacing the stalled mRNA. The ribosome then switches to translate the ORF on the tmRNA; the nascent peptide is terminated with the 'tag peptide' encoded by the tmRNA and targeted for degradation. The ribosome is freed to recommence translation, which seems to be the essential function of trans-translation. This chain is SsrA-binding protein, found in Mannheimia succiniciproducens (strain KCTC 0769BP / MBEL55E).